The following is a 115-amino-acid chain: Putative membrane protein insertion efficiency factor (115 aa).

The disordered stretch occupies residues 81 to 115 (DPRPGRCGCKDAGPAVSAGSTEGNPGRRTDGTDPD). Over residues 105-115 (PGRRTDGTDPD) the composition is skewed to basic and acidic residues.

It belongs to the UPF0161 family.

The protein resides in the cell inner membrane. Functionally, could be involved in insertion of integral membrane proteins into the membrane. The chain is Putative membrane protein insertion efficiency factor from Rhodospirillum rubrum (strain ATCC 11170 / ATH 1.1.1 / DSM 467 / LMG 4362 / NCIMB 8255 / S1).